We begin with the raw amino-acid sequence, 269 residues long: Adenylate kinase (269 aa).

G61–T66 is a binding site for ATP. The interval A81–V110 is NMP. AMP is bound by residues T82, R87, G108–V110, G137–R140, and Q144. The LID stretch occupies residues G178–D215. ATP is bound by residues R179 and S188–Y189. AMP-binding residues include R212 and R223. An ATP-binding site is contributed by Q251.

The protein belongs to the adenylate kinase family. AK2 subfamily. Monomer.

The protein resides in the cytoplasm. The protein localises to the cytosol. It localises to the mitochondrion intermembrane space. The enzyme catalyses AMP + ATP = 2 ADP. In terms of biological role, catalyzes the reversible transfer of the terminal phosphate group between ATP and AMP. Plays an important role in cellular energy homeostasis and in adenine nucleotide metabolism. Adenylate kinase activity is critical for regulation of the phosphate utilization and the AMP de novo biosynthesis pathways. The protein is Adenylate kinase of Cryptococcus neoformans var. neoformans serotype D (strain B-3501A) (Filobasidiella neoformans).